Here is a 454-residue protein sequence, read N- to C-terminus: Noelin-2 (454 aa).

The first 20 residues, 1 to 20 (MWPLTVPPPLLLLLCSGLAG), serve as a signal peptide directing secretion. Coiled coils occupy residues 58–85 (RDGR…LELR) and 136–193 (LEQY…AQKL). N-linked (GlcNAc...) asparagine glycans are attached at residues Asn-74, Asn-155, Asn-275, Asn-310, Asn-399, and Asn-441. Residues 194–446 (GCGKLTGVSN…QVLYNVTLFH (253 aa)) form the Olfactomedin-like domain. Cys-195 and Cys-377 are oxidised to a cystine.

In terms of assembly, peripherally associated with AMPAR complex. AMPAR complex consists of an inner core made of 4 pore-forming GluA/GRIA proteins (GRIA1, GRIA2, GRIA3 and GRIA4) and 4 major auxiliary subunits arranged in a twofold symmetry. One of the two pairs of distinct binding sites is occupied either by CNIH2, CNIH3 or CACNG2, CACNG3. The other harbors CACNG2, CACNG3, CACNG4, CACNG8 or GSG1L. This inner core of AMPAR complex is complemented by outer core constituents binding directly to the GluA/GRIA proteins at sites distinct from the interaction sites of the inner core constituents. Outer core constituents include at least PRRT1, PRRT2, CKAMP44/SHISA9, FRRS1L and NRN1. The proteins of the inner and outer core serve as a platform for other, more peripherally associated AMPAR constituents, including OLFM2. Alone or in combination, these auxiliary subunits control the gating and pharmacology of the AMPAR complex and profoundly impact their biogenesis and protein processing. Interacts with GRIA2. Interacts with OLFM1 and OLFM3. Interacts with SRF; the interaction promotes dissociation of SRF from the transcriptional repressor HEY2. Interacts with RUNX2. Post-translationally, N-glycosylated. Expressed in aortic smooth muscle (at protein level). In the fetus, expressed in the brain and ocular tissues including lens vesicle and optic cup.

Its subcellular location is the secreted. It localises to the synapse. The protein resides in the membrane. It is found in the nucleus. The protein localises to the cytoplasm. Functionally, involved in transforming growth factor beta (TGF-beta)-induced smooth muscle differentiation. TGF-beta induces expression and translocation of OLFM2 to the nucleus where it binds to SRF, causing its dissociation from the transcriptional repressor HEY2/HERP1 and facilitating binding of SRF to target genes. Plays a role in AMPAR complex organization. Is a regulator of vascular smooth-muscle cell (SMC) phenotypic switching, that acts by promoting RUNX2 and inhibiting MYOCD binding to SRF. SMC phenotypic switching is the process through which vascular SMCs undergo transition between a quiescent contractile phenotype and a proliferative synthetic phenotype in response to pathological stimuli. SMC phenotypic plasticity is essential for vascular development and remodeling. This is Noelin-2 (OLFM2) from Homo sapiens (Human).